A 383-amino-acid polypeptide reads, in one-letter code: Acetylornithine deacetylase (383 aa).

H80 is a Zn(2+) binding site. D82 is an active-site residue. D112 contributes to the Zn(2+) binding site. Residue E144 is part of the active site. Zn(2+) is bound by residues E145, E169, and H355.

The protein belongs to the peptidase M20A family. ArgE subfamily. Homodimer. It depends on Zn(2+) as a cofactor. Co(2+) is required as a cofactor. Glutathione serves as cofactor.

It is found in the cytoplasm. The catalysed reaction is N(2)-acetyl-L-ornithine + H2O = L-ornithine + acetate. Its pathway is amino-acid biosynthesis; L-arginine biosynthesis; L-ornithine from N(2)-acetyl-L-ornithine (linear): step 1/1. Functionally, catalyzes the hydrolysis of the amide bond of N(2)-acetylated L-amino acids. Cleaves the acetyl group from N-acetyl-L-ornithine to form L-ornithine, an intermediate in L-arginine biosynthesis pathway, and a branchpoint in the synthesis of polyamines. The protein is Acetylornithine deacetylase of Escherichia coli O157:H7.